The primary structure comprises 226 residues: Putative ankyrin repeat protein RF_0939 (226 aa).

4 ANK repeats span residues 56–86, 91–120, 125–154, and 157–194; these read VSTT…NVNM, FKDT…AVNG, LLGP…AVDQ, and SGET…DTNA.

The polypeptide is Putative ankyrin repeat protein RF_0939 (Rickettsia felis (strain ATCC VR-1525 / URRWXCal2) (Rickettsia azadi)).